The following is a 326-amino-acid chain: Beta-ketoacyl-[acyl-carrier-protein] synthase III (326 aa).

Residues Cys-112 and His-251 contribute to the active site. The tract at residues 252 to 256 (QANSR) is ACP-binding. Asn-281 is a catalytic residue.

It belongs to the thiolase-like superfamily. FabH family. Homodimer.

The protein localises to the cytoplasm. It carries out the reaction malonyl-[ACP] + acetyl-CoA + H(+) = 3-oxobutanoyl-[ACP] + CO2 + CoA. It participates in lipid metabolism; fatty acid biosynthesis. Functionally, catalyzes the condensation reaction of fatty acid synthesis by the addition to an acyl acceptor of two carbons from malonyl-ACP. Catalyzes the first condensation reaction which initiates fatty acid synthesis and may therefore play a role in governing the total rate of fatty acid production. Possesses both acetoacetyl-ACP synthase and acetyl transacylase activities. Its substrate specificity determines the biosynthesis of branched-chain and/or straight-chain of fatty acids. The polypeptide is Beta-ketoacyl-[acyl-carrier-protein] synthase III (Clostridium botulinum (strain Loch Maree / Type A3)).